The chain runs to 93 residues: Large ribosomal subunit protein uL23 (93 aa).

The protein belongs to the universal ribosomal protein uL23 family. In terms of assembly, part of the 50S ribosomal subunit. Contacts protein L29, and trigger factor when it is bound to the ribosome.

Functionally, one of the early assembly proteins it binds 23S rRNA. One of the proteins that surrounds the polypeptide exit tunnel on the outside of the ribosome. Forms the main docking site for trigger factor binding to the ribosome. This Sulfurovum sp. (strain NBC37-1) protein is Large ribosomal subunit protein uL23.